We begin with the raw amino-acid sequence, 319 residues long: Aspartate carbamoyltransferase catalytic subunit (319 aa).

Carbamoyl phosphate is bound by residues arginine 65 and threonine 66. Lysine 93 is a binding site for L-aspartate. Carbamoyl phosphate contacts are provided by arginine 115, histidine 143, and glutamine 146. L-aspartate is bound by residues arginine 176 and arginine 230. Carbamoyl phosphate-binding residues include glycine 271 and proline 272.

The protein belongs to the aspartate/ornithine carbamoyltransferase superfamily. ATCase family. In terms of assembly, heterododecamer (2C3:3R2) of six catalytic PyrB chains organized as two trimers (C3), and six regulatory PyrI chains organized as three dimers (R2).

The catalysed reaction is carbamoyl phosphate + L-aspartate = N-carbamoyl-L-aspartate + phosphate + H(+). The protein operates within pyrimidine metabolism; UMP biosynthesis via de novo pathway; (S)-dihydroorotate from bicarbonate: step 2/3. In terms of biological role, catalyzes the condensation of carbamoyl phosphate and aspartate to form carbamoyl aspartate and inorganic phosphate, the committed step in the de novo pyrimidine nucleotide biosynthesis pathway. The sequence is that of Aspartate carbamoyltransferase catalytic subunit from Chelativorans sp. (strain BNC1).